The following is a 306-amino-acid chain: Serine/threonine-protein phosphatase PP2A-1 catalytic subunit (306 aa).

Mn(2+) is bound by residues Asp54, His56, Asp82, and Asn114. His115 functions as the Proton donor in the catalytic mechanism. Residues His164 and His238 each contribute to the Mn(2+) site.

Belongs to the PPP phosphatase family. PP-2A subfamily. Requires Mn(2+) as cofactor.

It is found in the cytoplasm. The enzyme catalyses O-phospho-L-seryl-[protein] + H2O = L-seryl-[protein] + phosphate. It catalyses the reaction O-phospho-L-threonyl-[protein] + H2O = L-threonyl-[protein] + phosphate. This is Serine/threonine-protein phosphatase PP2A-1 catalytic subunit (PP2A1) from Oryza sativa subsp. indica (Rice).